The sequence spans 87 residues: U3-theraphotoxin-Hhn1p (87 aa).

The N-terminal stretch at 1–24 (MVNMKASMFLTFAGLVLLFVVCYA) is a signal peptide. The propeptide occupies 25–52 (SESEEKEFPKEMLSSIFAVDNDFKQEER). Disulfide bonds link Cys54-Cys67, Cys61-Cys72, and Cys66-Cys79.

The protein belongs to the neurotoxin 10 (Hwtx-1) family. 51 (Hntx-8) subfamily. Hntx-8 sub-subfamily. As to expression, expressed by the venom gland.

It is found in the secreted. Its function is as follows. Ion channel inhibitor. This is U3-theraphotoxin-Hhn1p from Cyriopagopus hainanus (Chinese bird spider).